The following is an 85-amino-acid chain: MYEKQVEITAENGLHTRPAAQFVKEAKAFDADITVTSNGKSASAKSLFKLQTLGLVKGTVVTISAEGPQAKEAVEHLVALMDQLH.

In terms of domain architecture, HPr spans 1–85; that stretch reads MYEKQVEITA…HLVALMDQLH (85 aa). His-15 acts as the Pros-phosphohistidine intermediate in catalysis.

It belongs to the HPr family.

Its subcellular location is the cytoplasm. Functionally, general (non sugar-specific) component of the phosphoenolpyruvate-dependent sugar phosphotransferase system (sugar PTS). This major carbohydrate active-transport system catalyzes the phosphorylation of incoming sugar substrates concomitantly with their translocation across the cell membrane. The phosphoryl group from phosphoenolpyruvate (PEP) is transferred to the phosphoryl carrier protein HPr by enzyme I. Phospho-HPr then transfers it to the PTS EIIA domain. This Vibrio cholerae serotype O1 (strain ATCC 39315 / El Tor Inaba N16961) protein is Phosphocarrier protein HPr (ptsH).